The sequence spans 429 residues: UDP-N-acetylglucosamine 1-carboxyvinyltransferase (429 aa).

Position 22–23 (Lys22–Asn23) interacts with phosphoenolpyruvate. Arg102 lines the UDP-N-acetyl-alpha-D-glucosamine pocket. The active-site Proton donor is Cys126. The residue at position 126 (Cys126) is a 2-(S-cysteinyl)pyruvic acid O-phosphothioketal. Residues Arg131 to Leu135, Asp316, and Ile338 contribute to the UDP-N-acetyl-alpha-D-glucosamine site.

This sequence belongs to the EPSP synthase family. MurA subfamily.

Its subcellular location is the cytoplasm. It carries out the reaction phosphoenolpyruvate + UDP-N-acetyl-alpha-D-glucosamine = UDP-N-acetyl-3-O-(1-carboxyvinyl)-alpha-D-glucosamine + phosphate. It participates in cell wall biogenesis; peptidoglycan biosynthesis. Cell wall formation. Adds enolpyruvyl to UDP-N-acetylglucosamine. In Rhodopseudomonas palustris (strain TIE-1), this protein is UDP-N-acetylglucosamine 1-carboxyvinyltransferase.